The primary structure comprises 219 residues: Protein RhiB (219 aa).

Polar residues predominate over residues 174–195 (AGISQQGNAAGTSISSKSTGSP). The segment at 174–201 (AGISQQGNAAGTSISSKSTGSPENPART) is disordered.

Functionally, may be involved in plant-microbe interaction. The polypeptide is Protein RhiB (rhiB) (Rhizobium leguminosarum bv. viciae).